The chain runs to 371 residues: Alginate lyase (371 aa).

A signal peptide spans 1–28 (MRRPMTLFKRISSPALLALALFGGAAHA). Substrate-binding positions include 67–68 (SK), 140–141 (HT), and Tyr-258.

The protein belongs to the polysaccharide lyase 5 family.

It localises to the periplasm. The catalysed reaction is Eliminative cleavage of alginate to give oligosaccharides with 4-deoxy-alpha-L-erythro-hex-4-enuronosyl groups at their non-reducing ends and beta-D-mannuronate at their reducing end.. Functionally, catalyzes the depolymerization of alginate by cleaving the beta-1,4 glycosidic bond between two adjacent sugar residues via a beta-elimination mechanism. May serve to degrade mislocalized alginate that is trapped in the periplasmic space. The polypeptide is Alginate lyase (Pseudomonas putida (strain ATCC 47054 / DSM 6125 / CFBP 8728 / NCIMB 11950 / KT2440)).